Consider the following 184-residue polypeptide: Photosystem I assembly protein Ycf4 (184 aa).

2 consecutive transmembrane segments (helical) span residues 19 to 39 and 57 to 77; these read ISNFCWACILFLGSLGFLLVG and IIFFPQGIVMSFYGIAGLFIS.

The protein belongs to the Ycf4 family.

It localises to the plastid. It is found in the chloroplast thylakoid membrane. Seems to be required for the assembly of the photosystem I complex. In Drimys granadensis, this protein is Photosystem I assembly protein Ycf4.